The following is a 77-amino-acid chain: Large ribosomal subunit protein uL29 (77 aa).

The protein belongs to the universal ribosomal protein uL29 family.

This is Large ribosomal subunit protein uL29 (rpmC) from Mycobacterium bovis (strain ATCC BAA-935 / AF2122/97).